The primary structure comprises 91 residues: Alpha-defensin-related sequence 12 (91 aa).

Positions 1–19 (MKKLVLLSAFVLLAFQVQA) are cleaved as a signal peptide. Residues 20–65 (DSIQNTDEEIKTEEQPGEENQAVSISFGDPEGYALQDAAIRRARRC) constitute a propeptide that is removed on maturation. Tandem repeats lie at residues 65–67 (CPP), 68–70 (CPS), 71–73 (CLS), 74–76 (CPW), 77–79 (CPR), and 83–85 (CPM). The tract at residues 65–88 (CPPCPSCLSCPWCPRCLRCPMCKC) is 6 X 3 AA tandem repeats of C-P-X.

It belongs to the alpha-defensin family. In terms of tissue distribution, paneth cells of the small bowel.

The protein localises to the secreted. In terms of biological role, apparent precursor of a secreted, cationic, proline- and cysteine-rich peptide that contains Cys-Pro-Xaa repeats. Unlike cryptdin, the proposed mature peptide region lacks the structural motif characteristic of defensins. It may have microbicidal activities. This chain is Alpha-defensin-related sequence 12 (Defa-rs12), found in Mus musculus (Mouse).